Consider the following 371-residue polypeptide: Probable endolytic peptidoglycan transglycosylase RlpA (371 aa).

Residues 1-25 (MNQRHLWTIVALSVTVLGTPAVGRT) form the signal peptide. Positions 177–191 (LVASQSQNKSSSSQQ) are enriched in low complexity. The tract at residues 177–196 (LVASQSQNKSSSSQQKSERY) is disordered.

It belongs to the RlpA family.

Its function is as follows. Lytic transglycosylase with a strong preference for naked glycan strands that lack stem peptides. The sequence is that of Probable endolytic peptidoglycan transglycosylase RlpA from Nostoc sp. (strain PCC 7120 / SAG 25.82 / UTEX 2576).